The chain runs to 395 residues: Putative 8-amino-7-oxononanoate synthase (395 aa).

Arg-23 is a binding site for substrate. Residue 110-111 (GF) coordinates pyridoxal 5'-phosphate. His-135 is a binding site for substrate. Residues Ser-182, 207–210 (DEAH), and 239–242 (TFSK) each bind pyridoxal 5'-phosphate. Lys-242 carries the N6-(pyridoxal phosphate)lysine modification. Substrate is bound at residue Thr-356.

The protein belongs to the class-II pyridoxal-phosphate-dependent aminotransferase family. BioF subfamily. Homodimer. Requires pyridoxal 5'-phosphate as cofactor.

The enzyme catalyses 6-carboxyhexanoyl-[ACP] + L-alanine + H(+) = (8S)-8-amino-7-oxononanoate + holo-[ACP] + CO2. The protein operates within cofactor biosynthesis; biotin biosynthesis. Functionally, catalyzes the decarboxylative condensation of pimeloyl-[acyl-carrier protein] and L-alanine to produce 8-amino-7-oxononanoate (AON), [acyl-carrier protein], and carbon dioxide. In Bacillus anthracis, this protein is Putative 8-amino-7-oxononanoate synthase (bioF).